The primary structure comprises 193 residues: Dense granule protein 2 (193 aa).

N-linked (GlcNAc...) asparagine glycosylation is present at Asn4. Residues 14–34 (FSPLTVVMLAVTLVAFMGVPL) form a helical membrane-spanning segment. Asn74 carries N-linked (GlcNAc...) asparagine glycosylation. The interval 75 to 140 (SSELAGSRDK…APKPVPVRSA (66 aa)) is disordered. Residues 88 to 98 (EAEEEAAEVET) are compositionally biased toward acidic residues. A helical transmembrane segment spans residues 153–173 (HRVIGTAVIAAVVAALLWKFS). The disordered stretch occupies residues 174–193 (RRRSGAPREGGENENGGEEK).

It belongs to the Gra6 family.

The protein localises to the membrane. This Neospora caninum (Coccidian parasite) protein is Dense granule protein 2 (DG2).